The following is a 61-amino-acid chain: Large ribosomal subunit protein uL30 (61 aa).

It belongs to the universal ribosomal protein uL30 family. In terms of assembly, part of the 50S ribosomal subunit.

This is Large ribosomal subunit protein uL30 from Chlorobium phaeovibrioides (strain DSM 265 / 1930) (Prosthecochloris vibrioformis (strain DSM 265)).